Here is a 394-residue protein sequence, read N- to C-terminus: uncharacterized protein (394 aa).

11 helical membrane-spanning segments follow: residues 10 to 30 (PALI…NYYA), 50 to 70 (FIVT…VPLG), 79 to 99 (IVSM…SQSL), 100 to 120 (AMMI…QILV), 138 to 158 (TIMS…GLLA), 166 to 186 (VFWV…RGLP), 218 to 238 (LLGC…AFLL), 243 to 263 (FNYS…GALG), 291 to 311 (WLAI…ILVL), 337 to 357 (LTAG…LISA), and 364 to 384 (GWAG…LVWW).

It belongs to the major facilitator superfamily.

Its subcellular location is the cell inner membrane. This is an uncharacterized protein from Escherichia coli O157:H7.